Reading from the N-terminus, the 352-residue chain is Nicotinate-nucleotide--dimethylbenzimidazole phosphoribosyltransferase (352 aa).

Residue Glu316 is the Proton acceptor of the active site.

The protein belongs to the CobT family.

The catalysed reaction is 5,6-dimethylbenzimidazole + nicotinate beta-D-ribonucleotide = alpha-ribazole 5'-phosphate + nicotinate + H(+). The protein operates within nucleoside biosynthesis; alpha-ribazole biosynthesis; alpha-ribazole from 5,6-dimethylbenzimidazole: step 1/2. In terms of biological role, catalyzes the synthesis of alpha-ribazole-5'-phosphate from nicotinate mononucleotide (NAMN) and 5,6-dimethylbenzimidazole (DMB). The protein is Nicotinate-nucleotide--dimethylbenzimidazole phosphoribosyltransferase of Yersinia enterocolitica serotype O:8 / biotype 1B (strain NCTC 13174 / 8081).